Reading from the N-terminus, the 129-residue chain is Mediator of RNA polymerase II transcription subunit 31-B (129 aa).

The protein belongs to the Mediator complex subunit 31 family. Component of the Mediator complex.

It localises to the nucleus. Functionally, component of the Mediator complex, a coactivator involved in the regulated transcription of nearly all RNA polymerase II-dependent genes. Mediator functions as a bridge to convey information from gene-specific regulatory proteins to the basal RNA polymerase II transcription machinery. Mediator is recruited to promoters by direct interactions with regulatory proteins and serves as a scaffold for the assembly of a functional preinitiation complex with RNA polymerase II and the general transcription factors. The protein is Mediator of RNA polymerase II transcription subunit 31-B (med31-b) of Xenopus laevis (African clawed frog).